The sequence spans 151 residues: uncharacterized protein (151 aa).

The tract at residues 1-77 (MSLLGGMWKS…LGSNPISSSR (77 aa)) is disordered. 2 stretches are compositionally biased toward low complexity: residues 19 to 54 (PKPSSNPLRSSGLNSGMSSRLNSKSSLRSGHSRSSN) and 63 to 76 (SISGSLGSNPISSS).

This is an uncharacterized protein from Methanothermobacter marburgensis (strain ATCC BAA-927 / DSM 2133 / JCM 14651 / NBRC 100331 / OCM 82 / Marburg) (Methanobacterium thermoautotrophicum).